A 219-amino-acid chain; its full sequence is Orotate phosphoribosyltransferase (219 aa).

Lys-26 is a binding site for 5-phospho-alpha-D-ribose 1-diphosphate. Position 34-35 (34-35 (FF)) interacts with orotate. 5-phospho-alpha-D-ribose 1-diphosphate is bound by residues 72–73 (YK), Arg-98, Lys-99, Lys-102, His-104, and 124–132 (DDVITAGTA). Orotate is bound by residues Thr-128 and Arg-156.

It belongs to the purine/pyrimidine phosphoribosyltransferase family. PyrE subfamily. In terms of assembly, homodimer. The cofactor is Mg(2+).

The catalysed reaction is orotidine 5'-phosphate + diphosphate = orotate + 5-phospho-alpha-D-ribose 1-diphosphate. Its pathway is pyrimidine metabolism; UMP biosynthesis via de novo pathway; UMP from orotate: step 1/2. Its function is as follows. Catalyzes the transfer of a ribosyl phosphate group from 5-phosphoribose 1-diphosphate to orotate, leading to the formation of orotidine monophosphate (OMP). The protein is Orotate phosphoribosyltransferase of Xanthomonas oryzae pv. oryzae (strain MAFF 311018).